A 145-amino-acid chain; its full sequence is Holo-[acyl-carrier-protein] synthase (145 aa).

Positions 9 and 59 each coordinate Mg(2+).

It belongs to the P-Pant transferase superfamily. AcpS family. It depends on Mg(2+) as a cofactor.

The protein localises to the cytoplasm. The catalysed reaction is apo-[ACP] + CoA = holo-[ACP] + adenosine 3',5'-bisphosphate + H(+). Its function is as follows. Transfers the 4'-phosphopantetheine moiety from coenzyme A to a Ser of acyl-carrier-protein. This chain is Holo-[acyl-carrier-protein] synthase, found in Nocardia farcinica (strain IFM 10152).